The following is a 242-amino-acid chain: C-reactive protein 1.1 (242 aa).

Residues M1 to A24 form the signal peptide. One can recognise a Pentraxin (PTX) domain in the interval I30–C241. Positions 60 and 63 each coordinate phosphocholine. 2 cysteine pairs are disulfide-bonded: C62-C125 and C112-C144. Residues D85 and N86 each contribute to the Ca(2+) site. N-linked (GlcNAc...) asparagine glycosylation is present at N147. 3 residues coordinate Ca(2+): Q169, D170, and Q180. Residues C207 and C241 are joined by a disulfide bond.

It belongs to the pentraxin family. As to quaternary structure, homopentamer. Pentraxin (or pentaxin) have a discoid arrangement of 5 non-covalently bound subunits. Ca(2+) serves as cofactor.

The protein resides in the secreted. In terms of biological role, might serve the role of immunoglobulins. In Limulus polyphemus (Atlantic horseshoe crab), this protein is C-reactive protein 1.1.